The sequence spans 169 residues: ATP synthase subunit b (169 aa).

A helical transmembrane segment spans residues Ile-11–Phe-31.

It belongs to the ATPase B chain family. In terms of assembly, F-type ATPases have 2 components, F(1) - the catalytic core - and F(0) - the membrane proton channel. F(1) has five subunits: alpha(3), beta(3), gamma(1), delta(1), epsilon(1). F(0) has three main subunits: a(1), b(2) and c(10-14). The alpha and beta chains form an alternating ring which encloses part of the gamma chain. F(1) is attached to F(0) by a central stalk formed by the gamma and epsilon chains, while a peripheral stalk is formed by the delta and b chains.

It localises to the cell membrane. Its function is as follows. F(1)F(0) ATP synthase produces ATP from ADP in the presence of a proton or sodium gradient. F-type ATPases consist of two structural domains, F(1) containing the extramembraneous catalytic core and F(0) containing the membrane proton channel, linked together by a central stalk and a peripheral stalk. During catalysis, ATP synthesis in the catalytic domain of F(1) is coupled via a rotary mechanism of the central stalk subunits to proton translocation. Component of the F(0) channel, it forms part of the peripheral stalk, linking F(1) to F(0). The chain is ATP synthase subunit b from Dehalococcoides mccartyi (strain ATCC BAA-2100 / JCM 16839 / KCTC 5957 / BAV1).